The following is a 532-amino-acid chain: Methionine--tRNA ligase (532 aa).

The 'HIGH' region signature appears at 16-26; the sequence is YYVNDVPHLGS. Zn(2+) is bound by residues Cys131, Cys134, Cys149, and His152. A 'KMSKS' region motif is present at residues 305 to 309; it reads KMGKS. Residue Lys308 coordinates ATP.

Belongs to the class-I aminoacyl-tRNA synthetase family. MetG type 2A subfamily. As to quaternary structure, monomer. Requires Zn(2+) as cofactor.

Its subcellular location is the cytoplasm. The catalysed reaction is tRNA(Met) + L-methionine + ATP = L-methionyl-tRNA(Met) + AMP + diphosphate. In terms of biological role, is required not only for elongation of protein synthesis but also for the initiation of all mRNA translation through initiator tRNA(fMet) aminoacylation. The polypeptide is Methionine--tRNA ligase (metG) (Synechocystis sp. (strain ATCC 27184 / PCC 6803 / Kazusa)).